A 501-amino-acid polypeptide reads, in one-letter code: Solute carrier family 2, facilitated glucose transporter member 5 (501 aa).

Met1 carries the post-translational modification N-acetylmethionine. Over 1–18 the chain is Cytoplasmic; that stretch reads MEPQDPVKREGRLTPVIV. Residues 19–39 form a helical membrane-spanning segment; it reads LATLIAAFGSSFQYGYNVAAI. Tyr32 contributes to the D-fructose binding site. At 40 to 68 the chain is on the extracellular side; that stretch reads NSPSEFMKDFYNYTYYDRVGEYMNEFYLT. Asn51 carries an N-linked (GlcNAc...) asparagine glycan. A helical transmembrane segment spans residues 69–91; it reads LLWSVTVSMFPFGGFLGSLMVGP. Over 92-98 the chain is Cytoplasmic; that stretch reads LVNNLGR. A helical transmembrane segment spans residues 99–119; sequence KGTLLFNNIFSIVPALLMGFS. The Extracellular segment spans residues 120–126; sequence ELAKSFE. A helical membrane pass occupies residues 127–149; it reads MIIVARVLVGICAGLSSNVVPMY. The Cytoplasmic portion of the chain corresponds to 150–161; sequence LGELAPKNWRGA. Residues 162–182 traverse the membrane as a helical segment; sequence LGVVPQLFITIGILVAQIFGL. Gln167 contacts D-fructose. Topologically, residues 183 to 192 are extracellular; the sequence is RSLLANEEGW. The chain crosses the membrane as a helical span at residues 193-213; the sequence is PILLGLTGIPAVLQLLFLPFF. Residues 214-277 lie on the Cytoplasmic side of the membrane; it reads PESPRYLLIQ…LFKMRSLRWQ (64 aa). The helical transmembrane segment at 278 to 298 threads the bilayer; it reads VISIIVLMAGQQLSGVNAIYY. D-fructose contacts are provided by residues Gln288 and 296–298; that span reads IYY. The Extracellular segment spans residues 299 to 313; it reads YADQIYLSAGVNEDD. The chain crosses the membrane as a helical span at residues 314-334; that stretch reads VQYVTAGTGAVNVLITVCAIF. Topologically, residues 335–342 are cytoplasmic; sequence VVELMGRR. A helical membrane pass occupies residues 343 to 363; the sequence is FLLLLGFSVCFTACCVLTGAL. Topologically, residues 364-371 are extracellular; it reads ALQDVISW. Residues 372-394 form a helical membrane-spanning segment; the sequence is MPYVSIACVISYVIGHALGPSPI. D-fructose is bound at residue His387. The Cytoplasmic portion of the chain corresponds to 395–412; the sequence is PALLVTEIFLQSSRPAAY. Residues 413–433 traverse the membrane as a helical segment; it reads MVAGTVHWLSNFTVGLVFPFI. 419–420 is a binding site for D-fructose; it reads HW. Topologically, residues 434–439 are extracellular; the sequence is QVGLGA. Residues 440–460 form a helical membrane-spanning segment; sequence YSFVIFAVICLLTTVYIFLII. Residues 461 to 501 are Cytoplasmic-facing; the sequence is PETKSKTFIEINRIFIKMNKVPGVHPEKEELKEFPPSTARQ.

It belongs to the major facilitator superfamily. Sugar transporter (TC 2.A.1.1) family. Glucose transporter subfamily.

The protein resides in the apical cell membrane. The protein localises to the cell membrane. It is found in the sarcolemma. The enzyme catalyses D-fructose(out) = D-fructose(in). Functions as a fructose transporter that has only low activity with other monosaccharides. Can mediate the uptake of deoxyglucose, but with low efficiency. Essential for fructose uptake in the small intestine. Plays a role in the regulation of salt uptake and blood pressure in response to dietary fructose. Required for the development of high blood pressure in response to high dietary fructose intake. The sequence is that of Solute carrier family 2, facilitated glucose transporter member 5 from Bos taurus (Bovine).